Here is a 104-residue protein sequence, read N- to C-terminus: Putative Fis-like DNA-binding protein (104 aa).

Positions 80–99 (QTKASELLGLNRGTLRKKLK) form a DNA-binding region, H-T-H motif.

This sequence belongs to the transcriptional regulatory Fis family.

This Pseudomonas aeruginosa (strain ATCC 15692 / DSM 22644 / CIP 104116 / JCM 14847 / LMG 12228 / 1C / PRS 101 / PAO1) protein is Putative Fis-like DNA-binding protein.